The following is a 437-amino-acid chain: MERWQNIHNVVVVGLGITGLSVVKHLRKTQPQLTVKVIDTRDNPPGAERLPEQVELHRGGWNTQWLAEADLVVTNPGIALATPEIQTVLAKGTPVVGDIELFAWAVNKPVVAITGSNGKSTVTDLTGVMAKAAGLTVGVGGNIGVPALELLEQDADLYVLELSSFQLETTSSLKLKAAAFLNLSEDHMDRYEGMADYRAAKLRIFDHAELAVVNRDDQETYPEVEMPVVTFGSDEQAYGLEVDGSRTWLLDHGQRVIASDELKLVGKHNLANALVVLALLKAAGVDYHNALNALKNYTGLTHRCQVVADNRGVKWVNDSKATNIASTMAALSGLESTGKLYLLVGGVGKGADFTPLKPIFATLNLQLCCFGLDGDDFMPLHESAIRFNTMEDVIQQISSQLKSGDMVMLSPACASFDQFDNFMARGDAFAVLAQKYA.

An ATP-binding site is contributed by glycine 115 to threonine 121.

The protein belongs to the MurCDEF family.

It localises to the cytoplasm. The catalysed reaction is UDP-N-acetyl-alpha-D-muramoyl-L-alanine + D-glutamate + ATP = UDP-N-acetyl-alpha-D-muramoyl-L-alanyl-D-glutamate + ADP + phosphate + H(+). The protein operates within cell wall biogenesis; peptidoglycan biosynthesis. In terms of biological role, cell wall formation. Catalyzes the addition of glutamate to the nucleotide precursor UDP-N-acetylmuramoyl-L-alanine (UMA). The chain is UDP-N-acetylmuramoylalanine--D-glutamate ligase from Vibrio parahaemolyticus serotype O3:K6 (strain RIMD 2210633).